The sequence spans 159 residues: MRISVEVINRQRKIRVASKKVISRIKKIVSFLYETKDKKLSKITVKNPAFLLISVIFVGDQKMKELNSKYRGKNSVTDILSFPYLENEPSGNLFLGEIIINPKKVFSQAKQYNKTFWQELDRILAHGILHLLGYDHEVSDSEARKMRKLEQKILSNLKP.

Residues H126, H130, and H136 each coordinate Zn(2+).

Belongs to the endoribonuclease YbeY family. Zn(2+) serves as cofactor.

It localises to the cytoplasm. In terms of biological role, single strand-specific metallo-endoribonuclease involved in late-stage 70S ribosome quality control and in maturation of the 3' terminus of the 16S rRNA. This chain is Endoribonuclease YbeY, found in Thermodesulfovibrio yellowstonii (strain ATCC 51303 / DSM 11347 / YP87).